A 256-amino-acid polypeptide reads, in one-letter code: MLHTTQIRMVGTGSAFSKKFYNNSALVTFTNGYNLLIDCGHSVPKGLHDADIPLESIDGILITHTHADHIGGLEEVALYNKFVLGGRKIDLLVPNTLVESLWENSLKGGLRYSDTYDDLSLSDYFTVRSLKTFTSGAARTQLEENIAIKLYPTFHVSHMASYAVGLEDRGEDKVFYSSDTIFDEYLIDYALTYSWVFHDCQFFTGGVHASLDELLNYIPEEDQDRVFLMHYGDNMEDFFTKTGRMRFALQGRTYIL.

Positions 21 to 230 are beta-lactamase-like; that stretch reads YNNSALVTFT…EDQDRVFLMH (210 aa). Positions 64, 66, 68, and 69 each coordinate Zn(2+). Catalysis depends on residues E74 and Y112. Zn(2+) is bound by residues H155, D179, and H230.

The protein belongs to the anti-Pycsar protein Apyc1 family. As to quaternary structure, homodimer. It depends on Zn(2+) as a cofactor.

The enzyme catalyses 3',5'-cyclic CMP + H2O = CMP + H(+). The catalysed reaction is 3',5'-cyclic UMP + H2O = UMP + H(+). Its function is as follows. Counteracts the host Pycsar antiviral defense system. Phosphodiesterase that enables metal-dependent hydrolysis of host cyclic nucleotide Pycsar defense signals such as cCMP and cUMP. This Bacillus phage BSP38 protein is Anti-Pycsar protein Apyc1.